The primary structure comprises 234 residues: Ribose-5-phosphate isomerase A (234 aa).

Residues 28–31 (TGST), 85–88 (DGAD), and 98–101 (KGLG) each bind substrate. Glu107 serves as the catalytic Proton acceptor. Lys125 is a binding site for substrate.

This sequence belongs to the ribose 5-phosphate isomerase family. In terms of assembly, homodimer.

The enzyme catalyses aldehydo-D-ribose 5-phosphate = D-ribulose 5-phosphate. It participates in carbohydrate degradation; pentose phosphate pathway; D-ribose 5-phosphate from D-ribulose 5-phosphate (non-oxidative stage): step 1/1. Catalyzes the reversible conversion of ribose-5-phosphate to ribulose 5-phosphate. The sequence is that of Ribose-5-phosphate isomerase A from Roseiflexus castenholzii (strain DSM 13941 / HLO8).